The following is a 443-amino-acid chain: Light-independent protochlorophyllide reductase subunit N (443 aa).

Residues cysteine 15, cysteine 40, and cysteine 99 each coordinate [4Fe-4S] cluster.

Belongs to the BchN/ChlN family. Protochlorophyllide reductase is composed of three subunits; BchL, BchN and BchB. Forms a heterotetramer of two BchB and two BchN subunits. It depends on [4Fe-4S] cluster as a cofactor.

It catalyses the reaction chlorophyllide a + oxidized 2[4Fe-4S]-[ferredoxin] + 2 ADP + 2 phosphate = protochlorophyllide a + reduced 2[4Fe-4S]-[ferredoxin] + 2 ATP + 2 H2O. It functions in the pathway porphyrin-containing compound metabolism; bacteriochlorophyll biosynthesis (light-independent). Component of the dark-operative protochlorophyllide reductase (DPOR) that uses Mg-ATP and reduced ferredoxin to reduce ring D of protochlorophyllide (Pchlide) to form chlorophyllide a (Chlide). This reaction is light-independent. The NB-protein (BchN-BchB) is the catalytic component of the complex. The polypeptide is Light-independent protochlorophyllide reductase subunit N (Heliobacterium modesticaldum (strain ATCC 51547 / Ice1)).